The sequence spans 358 residues: Src kinase-associated phosphoprotein 2 (358 aa).

2 positions are modified to phosphoserine: Ser-6 and Ser-9. Residues 60 to 108 (PQEFQDKGDAEEGDEYDDPFAGPPDTISLASERYDKDDDGPSDGNQFPP) form a disordered region. At Tyr-75 the chain carries Phosphotyrosine. Residues Ser-87 and Ser-90 each carry the phosphoserine modification. A PH domain is found at 116 to 219 (FVIKAGYLEK…WVQQLKFILQ (104 aa)). Residues Tyr-151 and Tyr-197 each carry the phosphotyrosine modification. Ser-223 carries the phosphoserine modification. A disordered region spans residues 227 to 293 (PEDEDEKGDL…DSVQHPSGDK (67 aa)). A compositionally biased stretch (low complexity) spans 243–253 (PVPVSSPQRSQ). A compositionally biased stretch (acidic residues) spans 255 to 270 (IDDEIYEELPEEEEDT). Tyr-260 is subject to Phosphotyrosine. A phosphoserine mark is found at Ser-272, Ser-282, and Ser-285. Residues 274–293 (KMDEQGKGSRDSVQHPSGDK) show a composition bias toward basic and acidic residues. An SH3 domain is found at 296–357 (DYANFYQGLW…PKAYLMEMYD (62 aa)).

This sequence belongs to the SKAP family. In terms of assembly, interacts with FYB1, which is required for SKAP2 protein stability. Interacts with PTPNS1. Part of a complex consisting of SKAP2, FYB1 and PTPNS1. Part of a complex consisting of SKAP2, FYB1 and LILRB3. Interacts with LAT, GRB2, PTK2B, and PRAM1. May interact with actin. May interact with FYN, HCK and LYN. Interacts with FASLG.

Its subcellular location is the cytoplasm. Its function is as follows. May be involved in B-cell and macrophage adhesion processes. In B-cells, may act by coupling the B-cell receptor (BCR) to integrin activation. May play a role in src signaling pathway. The sequence is that of Src kinase-associated phosphoprotein 2 (Skap2) from Rattus norvegicus (Rat).